We begin with the raw amino-acid sequence, 642 residues long: DNA gyrase subunit B (642 aa).

A Toprim domain is found at 422-536 (CELFIVEGDS…AGYVYIAQPP (115 aa)). Mg(2+)-binding residues include Glu428, Asp501, and Asp503.

The protein belongs to the type II topoisomerase family. In terms of assembly, heterotetramer, composed of two GyrA and two GyrB chains. Within the heterotetramer, GyrA contains the active site tyrosine that forms a covalent intermediate with the DNA, while GyrB contributes the cofactor binding sites and catalyzes ATP hydrolysis. Requires Mg(2+) as cofactor. The cofactor is Mn(2+). Ca(2+) is required as a cofactor.

It localises to the cytoplasm. The catalysed reaction is ATP-dependent breakage, passage and rejoining of double-stranded DNA.. Its activity is regulated as follows. Pyrrolopyrimidines inhibit both GyrB and its paralog in topoisomerase IV (parE). Functionally, DNA gyrase negatively supercoils closed circular double-stranded DNA in an ATP-dependent manner and also catalyzes the interconversion of other topological isomers of double-stranded DNA rings, including catenanes and knotted rings. The protein is DNA gyrase subunit B of Enterococcus faecalis (strain ATCC 700802 / V583).